The sequence spans 856 residues: FO synthase (856 aa).

Radical SAM core domains lie at 84 to 336 (ISYS…APPN) and 544 to 785 (VTFV…SHIQ). Positions 85-417 (SYSRKVFIPV…PRVRGHVVAL (333 aa)) are cofG-like. 6 residues coordinate [4Fe-4S] cluster: cysteine 98, cysteine 102, cysteine 105, cysteine 558, cysteine 562, and cysteine 565. Residues 521-854 (DGPALEAVAA…RQRTTTYALL (334 aa)) form a cofH-like region.

This sequence in the N-terminal section; belongs to the radical SAM superfamily. CofG family. The protein in the C-terminal section; belongs to the radical SAM superfamily. CofH family. Requires [4Fe-4S] cluster as cofactor.

The enzyme catalyses 5-amino-6-(D-ribitylamino)uracil + L-tyrosine + S-adenosyl-L-methionine = 5-amino-5-(4-hydroxybenzyl)-6-(D-ribitylimino)-5,6-dihydrouracil + 2-iminoacetate + 5'-deoxyadenosine + L-methionine + H(+). It catalyses the reaction 5-amino-5-(4-hydroxybenzyl)-6-(D-ribitylimino)-5,6-dihydrouracil + S-adenosyl-L-methionine = 7,8-didemethyl-8-hydroxy-5-deazariboflavin + 5'-deoxyadenosine + L-methionine + NH4(+) + H(+). Its pathway is cofactor biosynthesis; coenzyme F0 biosynthesis. Functionally, catalyzes the radical-mediated synthesis of 7,8-didemethyl-8-hydroxy-5-deazariboflavin (FO) from 5-amino-6-(D-ribitylamino)uracil and L-tyrosine. The sequence is that of FO synthase (fbiC) from Mycobacterium bovis (strain ATCC BAA-935 / AF2122/97).